Consider the following 145-residue polypeptide: Transcriptional regulator SlyA (145 aa).

The HTH marR-type domain maps to 2-135; it reads ELPLGSDLAR…LALLVARLEK (134 aa). Positions 49–72 form a DNA-binding region, H-T-H motif; it reads QIQLAKAIGIEQPSLVRTLDQLEE.

It belongs to the SlyA family. In terms of assembly, homodimer.

Functionally, transcription regulator that can specifically activate or repress expression of target genes. This chain is Transcriptional regulator SlyA, found in Pectobacterium carotovorum subsp. carotovorum (strain PC1).